We begin with the raw amino-acid sequence, 452 residues long: La-related protein 1B (452 aa).

Low complexity predominate over residues 1–22 (MATTASSAANSASRFSIDSSIS). The segment at 1-251 (MATTASSAAN…GFSHRNYSGR (251 aa)) is disordered. Ala-2 carries the N-acetylalanine modification. Positions 44–68 (LSLSQDDPFSAPSVSPPTGNNSSDY) are enriched in polar residues. Composition is skewed to low complexity over residues 99–117 (SWPALSLSARSSSIKSPSL), 136–163 (ATSNTSTNANAGSSVSATSSENSAVNNS), 171–185 (NNNTSSSSTSSNVSN), and 206–223 (SGNFRNSQRNRNSSSYPR). Over residues 225–236 (EGLHHGNRRNYE) the composition is skewed to basic and acidic residues. Polar residues predominate over residues 237-247 (HGNQSGFSHRN). The HTH La-type RNA-binding domain maps to 328–417 (RNFDAILYNK…RGDWDKYLLP (90 aa)). The segment at 419 to 452 (EPSRSGPAAGASNNASLVSQIESMTLSERSREGV) is disordered. Over residues 422-434 (RSGPAAGASNNAS) the composition is skewed to low complexity. Residues 435–445 (LVSQIESMTLS) show a composition bias toward polar residues.

The protein belongs to the LARP family.

Its subcellular location is the cytoplasm. In terms of biological role, promotes leaf senescence. This Arabidopsis thaliana (Mouse-ear cress) protein is La-related protein 1B (LARP1B).